The chain runs to 1227 residues: Pentatricopeptide repeat-containing protein At5g15280, mitochondrial (1227 aa).

The N-terminal 31 residues, 1 to 31 (MLNLLSISSSSRLRFLNKVSSLTYHYSFAFF), are a transit peptide targeting the mitochondrion. PPR repeat units follow at residues 146–180 (LPQACEIMASMLIREGMVKEVELLLMEMERHGDTM), 182–216 (NEGIFCDLIGKYVDDFDSRKAVMLFDWMRRKGLVP), 217–251 (LTSCYQILIDQLVRVHRTESAYRICLDWVETRAEL), 255–289 (NIDSIGKVIELLCLDQKVQEARVLARKLVALGCIL), 290–320 (NSSIYSKITIGYNEKQDFEDLLSFIGEVKYE), 322–356 (DVFVGNRILHSLCRRFGSERAYVYMEELEHLGFKQ), 357–391 (DEVTFGILIGWCCYEGDIKRAVLYLSEIMSKGYKP), 392–426 (DVYSYNAILSGLFRKGLWQHTHCILDEMKENGMML), 427–461 (SLSTFKIMVTGYCKARQFEEAKRIVNKMFGYGLIE), 527–561 (VLPEFNSLIVRASEDGDLQTALRLLDEMARWGQKL), 562–597 (SRRSFAVLMRSLCASRAHLRVSISLLEKWPKLAYQL), 598–632 (DGETLNFLVQEYCKKGFSRHSKLIFHKMVQMHHPI), 633–667 (DNVTYTSLIRCFCKKETLNDLLNVWGAAQNDNWLP), 668–698 (DLNDCGDLWNCLVRKGLVEEVVQLFERVFIS), 703–737 (QSEACRIFVEKLTVLGFSCIAHSVVKRLEGEGCIV), 738–772 (EQEVYNHLIKGLCTEKKDSAAFAILDEMLDKKHIP), 773–800 (SLGSCLMLIPRLCRANKAGTAFNLAEQI), 802–836 (SSYVHYALIKGLSLAGKMLDAENQLRIMLSNGLSS), 837–871 (YNKIYNVMFQGYCKGNNWMKVEEVLGLMVRKNIIC), 872–906 (SVKSYREYVRKMCLEPQSLSAISLKEFLLLGESNP), 908–942 (GVIIYNMLIFYMFRAKNHLEVNKVLLEMQGRGVLP), 943–977 (DETTFNFLVHGYSSSADYSSSLRYLSAMISKGMKP), 978–1012 (NNRSLRAVTSSLCDNGDVKKALDLWQVMESKGWNL), 1014–1044 (SSVVQTKIVETLISKGEIPKAEDFLTRVTRN), 1047–1081 (MAPNYDNIIKKLSDRGNLDIAVHLLNTMLKNQSIP), 1082–1116 (GSSSYDSVINGLLRYNQLDKAMDFHTEMVELGLSP), 1117–1151 (SISTWSGLVHKFCEACQVLESERLIKSMVGLGESP), and 1152–1186 (SQEMFKTVIDRFRVEKNTVKASEMMEMMQKCGYEV).

The protein belongs to the PPR family. P subfamily.

The protein resides in the mitochondrion. This is Pentatricopeptide repeat-containing protein At5g15280, mitochondrial from Arabidopsis thaliana (Mouse-ear cress).